The primary structure comprises 434 residues: Methylenetetrahydrofolate--tRNA-(uracil-5-)-methyltransferase TrmFO (434 aa).

9-14 is a binding site for FAD; sequence GAGLAG.

The protein belongs to the MnmG family. TrmFO subfamily. FAD is required as a cofactor.

It localises to the cytoplasm. The catalysed reaction is uridine(54) in tRNA + (6R)-5,10-methylene-5,6,7,8-tetrahydrofolate + NADH + H(+) = 5-methyluridine(54) in tRNA + (6S)-5,6,7,8-tetrahydrofolate + NAD(+). It catalyses the reaction uridine(54) in tRNA + (6R)-5,10-methylene-5,6,7,8-tetrahydrofolate + NADPH + H(+) = 5-methyluridine(54) in tRNA + (6S)-5,6,7,8-tetrahydrofolate + NADP(+). In terms of biological role, catalyzes the folate-dependent formation of 5-methyl-uridine at position 54 (M-5-U54) in all tRNAs. This chain is Methylenetetrahydrofolate--tRNA-(uracil-5-)-methyltransferase TrmFO, found in Bacillus pumilus (strain SAFR-032).